A 107-amino-acid polypeptide reads, in one-letter code: U1-lycotoxin-Ls1b (107 aa).

The signal sequence occupies residues 1 to 20; that stretch reads MMKVLVVVALLVTLISYSSS. Residues 21 to 41 constitute a propeptide that is removed on maturation; the sequence is EGIDDLEADELLSLMADEQTR. Intrachain disulfides connect C44–C59, C51–C68, C58–C86, and C70–C84.

This sequence belongs to the neurotoxin 19 (CSTX) family. 04 (U1-Lctx) subfamily. Expressed by the venom gland.

The protein localises to the secreted. The chain is U1-lycotoxin-Ls1b from Lycosa singoriensis (Wolf spider).